The sequence spans 972 residues: Cycloisomaltooligosaccharide glucanotransferase (972 aa).

Positions 1-38 (MVRFMYALRKRRLSLLLAMSLLVMCVASVVSPPPQALA) are cleaved as a signal peptide. CBM6 domains follow at residues 421 to 546 (TRYE…LTLG) and 748 to 871 (DIYE…LDLD).

This sequence belongs to the glycosyl hydrolase 66 family. As to quaternary structure, monomer.

It catalyses the reaction cyclizes part of a (1-&gt;6)-alpha-D-glucan chain by formation of a (1-&gt;6)-alpha-D-glucosidic bond.. Produces cycloisomaltooligosaccharide from dextran containing 7, 8 or 9 glucose units. The enzyme is specific for (1-&gt;6)-alpha-D-glucans (dextrans) and, without activity toward (1-&gt;4)-alpha-D-glucans, such as amylose. It also has no activity on oligosaccharides, such as amylopectin and pullulan, containing (1-&gt;6)-alpha-D-glucosidic linkages at branch points. This chain is Cycloisomaltooligosaccharide glucanotransferase, found in Niallia circulans (Bacillus circulans).